The primary structure comprises 493 residues: Involucrin (493 aa).

Disordered stretches follow at residues 1 to 47 (MSQQ…CQKV), 60 to 123 (EEKH…GQLE), and 139 to 493 (KRDE…GQHE). Residues 76–89 (EQQQPQEQELQQQH) are compositionally biased toward low complexity. Composition is skewed to basic and acidic residues over residues 90 to 116 (WEQDKEHQKAENPEQQLKQEKVQREKQ), 139 to 151 (KRDEQLGTKKEQL), 161 to 174 (QLKHLEQEEGHLEL), 184 to 193 (NLEHQEKPLE), and 201 to 213 (QLKHLEQQEKPLE). Residues 228-240 (QEGQSELPEQQRG) show a composition bias toward polar residues. 5 stretches are compositionally biased toward basic and acidic residues: residues 250-270 (GQLKHLEEQKGQLKHLEHEEG), 282-360 (KHLE…HEGQ), 372-386 (KHLEQEEKQLEHPEQ), 411-431 (KHLEQQEKQLEHPQQQEEQLK), and 439-450 (QLKDLEQQERQL). The segment covering 473–493 (GEVLLPVEQQQQKQEVQGQHE) has biased composition (low complexity).

This sequence belongs to the involucrin family. Directly or indirectly cross-linked to cornifelin (CNFN). Post-translationally, substrate of transglutaminase. Specific glutamines or lysines are cross-linked to keratins, desmoplakin and to inter involucrin molecules. As to expression, keratinocytes of epidermis and other stratified squamous epithelia.

It localises to the cytoplasm. Part of the insoluble cornified cell envelope (CE) of stratified squamous epithelia. This chain is Involucrin (IVL), found in Saguinus oedipus (Cotton-top tamarin).